The sequence spans 388 residues: Chorismate synthase (388 aa).

Residues R39 and R45 each coordinate NADP(+). FMN is bound by residues 130–132, 251–252, G296, 311–315, and R337; these read RSS, NA, and KPIPT.

This sequence belongs to the chorismate synthase family. Homotetramer. FMNH2 is required as a cofactor.

The catalysed reaction is 5-O-(1-carboxyvinyl)-3-phosphoshikimate = chorismate + phosphate. Its pathway is metabolic intermediate biosynthesis; chorismate biosynthesis; chorismate from D-erythrose 4-phosphate and phosphoenolpyruvate: step 7/7. In terms of biological role, catalyzes the anti-1,4-elimination of the C-3 phosphate and the C-6 proR hydrogen from 5-enolpyruvylshikimate-3-phosphate (EPSP) to yield chorismate, which is the branch point compound that serves as the starting substrate for the three terminal pathways of aromatic amino acid biosynthesis. This reaction introduces a second double bond into the aromatic ring system. The protein is Chorismate synthase of Streptococcus suis (strain 98HAH33).